A 264-amino-acid polypeptide reads, in one-letter code: tRNA pseudouridine synthase A (264 aa).

Catalysis depends on Asp-51, which acts as the Nucleophile. Tyr-109 provides a ligand contact to substrate.

This sequence belongs to the tRNA pseudouridine synthase TruA family. As to quaternary structure, homodimer.

It catalyses the reaction uridine(38/39/40) in tRNA = pseudouridine(38/39/40) in tRNA. Its function is as follows. Formation of pseudouridine at positions 38, 39 and 40 in the anticodon stem and loop of transfer RNAs. The chain is tRNA pseudouridine synthase A from Pseudoalteromonas translucida (strain TAC 125).